We begin with the raw amino-acid sequence, 173 residues long: NADH-quinone oxidoreductase subunit B (173 aa).

The [4Fe-4S] cluster site is built by Cys-52, Cys-53, Cys-117, and Cys-147.

Belongs to the complex I 20 kDa subunit family. NDH-1 is composed of 14 different subunits. Subunits NuoB, C, D, E, F, and G constitute the peripheral sector of the complex. Requires [4Fe-4S] cluster as cofactor.

The protein resides in the cell inner membrane. The enzyme catalyses a quinone + NADH + 5 H(+)(in) = a quinol + NAD(+) + 4 H(+)(out). NDH-1 shuttles electrons from NADH, via FMN and iron-sulfur (Fe-S) centers, to quinones in the respiratory chain. Couples the redox reaction to proton translocation (for every two electrons transferred, four hydrogen ions are translocated across the cytoplasmic membrane), and thus conserves the redox energy in a proton gradient. This is NADH-quinone oxidoreductase subunit B from Pelagibacter ubique (strain HTCC1062).